The sequence spans 169 residues: Large ribosomal subunit protein uL10 (169 aa).

The protein belongs to the universal ribosomal protein uL10 family. Part of the ribosomal stalk of the 50S ribosomal subunit. The N-terminus interacts with L11 and the large rRNA to form the base of the stalk. The C-terminus forms an elongated spine to which L12 dimers bind in a sequential fashion forming a multimeric L10(L12)X complex.

Functionally, forms part of the ribosomal stalk, playing a central role in the interaction of the ribosome with GTP-bound translation factors. This chain is Large ribosomal subunit protein uL10, found in Onion yellows phytoplasma (strain OY-M).